The following is a 269-amino-acid chain: Adenosylcobinamide-GDP ribazoletransferase (269 aa).

Transmembrane regions (helical) follow at residues Q8–I28, Y41–L61, V70–A90, I114–L136, and V196–V216.

The protein belongs to the CobS family. It depends on Mg(2+) as a cofactor.

The protein resides in the cell inner membrane. It carries out the reaction alpha-ribazole + adenosylcob(III)inamide-GDP = adenosylcob(III)alamin + GMP + H(+). The catalysed reaction is alpha-ribazole 5'-phosphate + adenosylcob(III)inamide-GDP = adenosylcob(III)alamin 5'-phosphate + GMP + H(+). Its pathway is cofactor biosynthesis; adenosylcobalamin biosynthesis; adenosylcobalamin from cob(II)yrinate a,c-diamide: step 7/7. Joins adenosylcobinamide-GDP and alpha-ribazole to generate adenosylcobalamin (Ado-cobalamin). Also synthesizes adenosylcobalamin 5'-phosphate from adenosylcobinamide-GDP and alpha-ribazole 5'-phosphate. The polypeptide is Adenosylcobinamide-GDP ribazoletransferase (Pseudoalteromonas atlantica (strain T6c / ATCC BAA-1087)).